Reading from the N-terminus, the 285-residue chain is uncharacterized protein (285 aa).

Mn(2+) contacts are provided by H110, D131, H133, D135, D214, and D216.

Belongs to the arginase family. Requires Mn(2+) as cofactor.

This is an uncharacterized protein from Methanothermus fervidus.